The primary structure comprises 215 residues: MWRDDLPRFQPSHCRPLTVFTRPLARLIEQFERLPGIGPRTAQRLALHLLRQPEEQSRAFADALLAARQQVGQCQRCGHLSADPICDICRNPERNIGVICVVADSRDLLALERTREFSGSYHVLGGLISPMDGIGPEALGIQPLLQRLDPEQVEEVILALTPSVEGDTTSLYLARLLKPFCRVTRIAYGLPVGSELEYADDVTLARALEGRRIVE.

The segment at 74–89 adopts a C4-type zinc-finger fold; the sequence is CQRCGHLSADPICDIC. In terms of domain architecture, Toprim spans 97 to 191; it reads GVICVVADSR…RVTRIAYGLP (95 aa).

Belongs to the RecR family.

May play a role in DNA repair. It seems to be involved in an RecBC-independent recombinational process of DNA repair. It may act with RecF and RecO. In Synechococcus sp. (strain RCC307), this protein is Recombination protein RecR.